A 79-amino-acid polypeptide reads, in one-letter code: D-alanyl carrier protein (79 aa).

Residues 1 to 77 form the Carrier domain; it reads MDTKQGVLDI…KIVAKVESLE (77 aa). S35 bears the O-(pantetheine 4'-phosphoryl)serine mark.

Belongs to the DltC family. In terms of processing, 4'-phosphopantetheine is transferred from CoA to a specific serine of apo-DCP.

It is found in the cytoplasm. It functions in the pathway cell wall biogenesis; lipoteichoic acid biosynthesis. Its function is as follows. Carrier protein involved in the D-alanylation of lipoteichoic acid (LTA). The loading of thioester-linked D-alanine onto DltC is catalyzed by D-alanine--D-alanyl carrier protein ligase DltA. The DltC-carried D-alanyl group is further transferred to cell membrane phosphatidylglycerol (PG) by forming an ester bond, probably catalyzed by DltD. D-alanylation of LTA plays an important role in modulating the properties of the cell wall in Gram-positive bacteria, influencing the net charge of the cell wall. The chain is D-alanyl carrier protein from Lactobacillus acidophilus (strain ATCC 700396 / NCK56 / N2 / NCFM).